Here is a 199-residue protein sequence, read N- to C-terminus: uncharacterized protein (199 aa).

It is found in the mitochondrion. This is an uncharacterized protein from Schizosaccharomyces pombe (strain 972 / ATCC 24843) (Fission yeast).